A 580-amino-acid chain; its full sequence is NADH-quinone oxidoreductase subunit C/D (580 aa).

The NADH dehydrogenase I subunit C stretch occupies residues 1–171 (MSLDQAIPEA…PPFVLTDRLF (171 aa)). An NADH dehydrogenase I subunit D region spans residues 195–580 (ELMVLNFGPH…IDFVMSDVDR (386 aa)).

The protein in the N-terminal section; belongs to the complex I 30 kDa subunit family. In the C-terminal section; belongs to the complex I 49 kDa subunit family. In terms of assembly, NDH-1 is composed of 13 different subunits. Subunits NuoB, CD, E, F, and G constitute the peripheral sector of the complex.

The protein localises to the cell inner membrane. It carries out the reaction a quinone + NADH + 5 H(+)(in) = a quinol + NAD(+) + 4 H(+)(out). Its function is as follows. NDH-1 shuttles electrons from NADH, via FMN and iron-sulfur (Fe-S) centers, to quinones in the respiratory chain. The immediate electron acceptor for the enzyme in this species is believed to be ubiquinone. Couples the redox reaction to proton translocation (for every two electrons transferred, four hydrogen ions are translocated across the cytoplasmic membrane), and thus conserves the redox energy in a proton gradient. The sequence is that of NADH-quinone oxidoreductase subunit C/D from Cereibacter sphaeroides (strain ATCC 17029 / ATH 2.4.9) (Rhodobacter sphaeroides).